The primary structure comprises 285 residues: tRNA pseudouridine synthase B (285 aa).

The active-site Nucleophile is aspartate 40.

It belongs to the pseudouridine synthase TruB family. Type 1 subfamily.

The enzyme catalyses uridine(55) in tRNA = pseudouridine(55) in tRNA. In terms of biological role, responsible for synthesis of pseudouridine from uracil-55 in the psi GC loop of transfer RNAs. This chain is tRNA pseudouridine synthase B, found in Caldanaerobacter subterraneus subsp. tengcongensis (strain DSM 15242 / JCM 11007 / NBRC 100824 / MB4) (Thermoanaerobacter tengcongensis).